The following is a 527-amino-acid chain: Putative BTB/POZ domain and WD-repeat protein R783 (527 aa).

One can recognise a BTB domain in the interval 45–115 (TDVTIVLDDG…FYSQNTDTRN (71 aa)). WD repeat units follow at residues 215 to 266 (IHGD…VEAS), 272 to 310 (NVKTRFEHFCYLPSNNHLISTSSYNIYVWDLSTNKLIKT), 313 to 353 (KHKN…IVRC), 355 to 391 (ISPVDCICYSSSGRELVIVNKHYIKVFNVSDGTFLFK), and 436 to 476 (YCPS…DNKY).

Belongs to the mimivirus BTB/WD family.

This Acanthamoeba polyphaga (Amoeba) protein is Putative BTB/POZ domain and WD-repeat protein R783.